The sequence spans 528 residues: Protein phosphatase 1 regulatory subunit 16A (528 aa).

Residues 18–45 (STQERLKHAQKRRAQQVKMWAQAEKEAQ) adopt a coiled-coil conformation. Residues 19-59 (TQERLKHAQKRRAQQVKMWAQAEKEAQGKKGPGERPRKEAA) form a disordered region. Basic and acidic residues predominate over residues 40–58 (AEKEAQGKKGPGERPRKEA). 5 ANK repeats span residues 70-99 (PPSV…SPDL), 103-132 (DGLT…NINA), 136-165 (ECWT…NLLA), 231-260 (HGAT…SLSA), and 264-293 (DGWE…DLNA). Disordered stretches follow at residues 330–351 (RQRS…VVRR) and 367–421 (QEAI…SPVR). Ser-433 is modified (phosphoserine). The tract at residues 462–505 (QRAAAKLQRPPPEGPESPETAEPGLPGDTVTPQPDCGFRAGGDP) is disordered. A lipid anchor (S-palmitoyl cysteine) is attached at Cys-524. A Cysteine methyl ester modification is found at Cys-525. Cys-525 is lipidated: S-farnesyl cysteine. A propeptide spans 526-528 (LLM) (removed in mature form).

As to quaternary structure, binds PP1.

The protein resides in the cell membrane. Functionally, inhibits protein phosphatase 1 activity toward phosphorylase, myosin light chain and myosin substrates. The protein is Protein phosphatase 1 regulatory subunit 16A (PPP1R16A) of Homo sapiens (Human).